The chain runs to 196 residues: Large ribosomal subunit protein uL11m (196 aa).

The protein belongs to the universal ribosomal protein uL11 family. Component of the mitochondrial ribosome large subunit (39S) which comprises a 16S rRNA and about 50 distinct proteins.

It is found in the mitochondrion. This is Large ribosomal subunit protein uL11m (mRpL11) from Drosophila melanogaster (Fruit fly).